The following is a 135-amino-acid chain: Small ribosomal subunit protein uS12 (135 aa).

At Asp89 the chain carries 3-methylthioaspartic acid. The disordered stretch occupies residues 101-135 (SLDTSGVADRKQSRSKYGAKQPKAGAAAPVKGKRR). A compositionally biased stretch (low complexity) spans 116–135 (KYGAKQPKAGAAAPVKGKRR).

The protein belongs to the universal ribosomal protein uS12 family. Part of the 30S ribosomal subunit. Contacts proteins S8 and S17. May interact with IF1 in the 30S initiation complex.

With S4 and S5 plays an important role in translational accuracy. Functionally, interacts with and stabilizes bases of the 16S rRNA that are involved in tRNA selection in the A site and with the mRNA backbone. Located at the interface of the 30S and 50S subunits, it traverses the body of the 30S subunit contacting proteins on the other side and probably holding the rRNA structure together. The combined cluster of proteins S8, S12 and S17 appears to hold together the shoulder and platform of the 30S subunit. This Chlorobium phaeobacteroides (strain DSM 266 / SMG 266 / 2430) protein is Small ribosomal subunit protein uS12.